We begin with the raw amino-acid sequence, 728 residues long: U-box domain-containing protein 4 (728 aa).

Residues 296 to 370 (SVPKEFSCPI…SQWCGVYGLQ (75 aa)) form the U-box domain. 2 ARM repeats span residues 441-483 (GAIP…EQEG) and 526-568 (GAVE…ESCA).

It catalyses the reaction S-ubiquitinyl-[E2 ubiquitin-conjugating enzyme]-L-cysteine + [acceptor protein]-L-lysine = [E2 ubiquitin-conjugating enzyme]-L-cysteine + N(6)-ubiquitinyl-[acceptor protein]-L-lysine.. The protein operates within protein modification; protein ubiquitination. Its function is as follows. Possesses E3 ubiquitin-protein ligase in vitro. The sequence is that of U-box domain-containing protein 4 (PUB4) from Oryza sativa subsp. japonica (Rice).